Consider the following 156-residue polypeptide: Ribosomal RNA large subunit methyltransferase H (156 aa).

S-adenosyl-L-methionine is bound by residues leucine 73, glycine 104, and 123 to 128 (LSALTL).

The protein belongs to the RNA methyltransferase RlmH family. In terms of assembly, homodimer.

Its subcellular location is the cytoplasm. The enzyme catalyses pseudouridine(1915) in 23S rRNA + S-adenosyl-L-methionine = N(3)-methylpseudouridine(1915) in 23S rRNA + S-adenosyl-L-homocysteine + H(+). Functionally, specifically methylates the pseudouridine at position 1915 (m3Psi1915) in 23S rRNA. The polypeptide is Ribosomal RNA large subunit methyltransferase H (Shewanella putrefaciens (strain CN-32 / ATCC BAA-453)).